The chain runs to 87 residues: U3-theraphotoxin-Hhn1h (87 aa).

The first 24 residues, 1–24, serve as a signal peptide directing secretion; sequence MVNMKASMFLTFAGLVLLFVVCYA. Residues 25 to 52 constitute a propeptide that is removed on maturation; it reads SESEEKEFPKEMLSSIFAVDNDSKQEER. Cystine bridges form between Cys54/Cys67, Cys61/Cys72, and Cys66/Cys79.

It belongs to the neurotoxin 10 (Hwtx-1) family. 51 (Hntx-8) subfamily. Hntx-8 sub-subfamily. In terms of tissue distribution, expressed by the venom gland.

It is found in the secreted. Its function is as follows. Ion channel inhibitor. The sequence is that of U3-theraphotoxin-Hhn1h from Cyriopagopus hainanus (Chinese bird spider).